A 744-amino-acid chain; its full sequence is Potassium-transporting ATPase ATP-binding subunit (744 aa).

The next 4 membrane-spanning stretches (helical) occupy residues 80–100 (PVMF…VMAL), 108–128 (AGFI…ANVA), 265–285 (LALT…TVTL), and 310–330 (VLVA…LSAI). The active-site 4-aspartylphosphate intermediate is aspartate 363. ATP-binding positions include aspartate 400, glutamate 404, 435-442 (FSAQTRMS), and lysine 457. Mg(2+) contacts are provided by aspartate 580 and aspartate 584. 3 helical membrane-spanning segments follow: residues 650–670 (FAII…LNVM), 678–698 (AVMS…PLAL), and 724–744 (LLLP…MGWV).

This sequence belongs to the cation transport ATPase (P-type) (TC 3.A.3) family. Type IA subfamily. In terms of assembly, the system is composed of three essential subunits: KdpA, KdpB and KdpC.

The protein resides in the cell inner membrane. It catalyses the reaction K(+)(out) + ATP + H2O = K(+)(in) + ADP + phosphate + H(+). Its function is as follows. Part of the high-affinity ATP-driven potassium transport (or Kdp) system, which catalyzes the hydrolysis of ATP coupled with the electrogenic transport of potassium into the cytoplasm. This subunit is responsible for energy coupling to the transport system and for the release of the potassium ions to the cytoplasm. This chain is Potassium-transporting ATPase ATP-binding subunit, found in Ralstonia nicotianae (strain ATCC BAA-1114 / GMI1000) (Ralstonia solanacearum).